The primary structure comprises 469 residues: Argininosuccinate lyase (469 aa).

The protein belongs to the lyase 1 family. Argininosuccinate lyase subfamily.

It is found in the cytoplasm. It carries out the reaction 2-(N(omega)-L-arginino)succinate = fumarate + L-arginine. Its pathway is amino-acid biosynthesis; L-arginine biosynthesis; L-arginine from L-ornithine and carbamoyl phosphate: step 3/3. This Paracoccus denitrificans (strain Pd 1222) protein is Argininosuccinate lyase.